A 467-amino-acid chain; its full sequence is Cysteine--tRNA ligase (467 aa).

A Zn(2+)-binding site is contributed by C27. Residues 29-39 carry the 'HIGH' region motif; the sequence is PTVYNYIHIGN. Zn(2+)-binding residues include C207, H232, and E236. Residues 264–268 carry the 'KMSKS' region motif; the sequence is KMSKS. Position 267 (K267) interacts with ATP.

The protein belongs to the class-I aminoacyl-tRNA synthetase family. In terms of assembly, monomer. Requires Zn(2+) as cofactor.

It localises to the cytoplasm. The catalysed reaction is tRNA(Cys) + L-cysteine + ATP = L-cysteinyl-tRNA(Cys) + AMP + diphosphate. The sequence is that of Cysteine--tRNA ligase from Caldanaerobacter subterraneus subsp. tengcongensis (strain DSM 15242 / JCM 11007 / NBRC 100824 / MB4) (Thermoanaerobacter tengcongensis).